We begin with the raw amino-acid sequence, 152 residues long: Endoribonuclease YbeY (152 aa).

The Zn(2+) site is built by His-112, His-116, and His-122.

It belongs to the endoribonuclease YbeY family. The cofactor is Zn(2+).

The protein localises to the cytoplasm. Single strand-specific metallo-endoribonuclease involved in late-stage 70S ribosome quality control and in maturation of the 3' terminus of the 16S rRNA. This is Endoribonuclease YbeY from Pseudoalteromonas translucida (strain TAC 125).